Consider the following 274-residue polypeptide: MAIVKCKPTSAGRRHVVKVVNADLHKGKPYAPLLEKNSKNGGRNNNGRITVRHIGGGHKQHYRLVDFKRTKDGIPAKVERLEYDPNRSANIALVLYADGERRYIIAPKGLQAGDVIQSGPDAPIKAGNAMPMRNIPVGSTIHNVELTPGKGAQLARSAGAYAQLVARDGAYVTLRLRSGEMRKVLSEGRATIGEVGNAEHMLRELGKAGAARWRGVRPTVRGVVMNPVDHPHGGGEGRTSGGRHPVSPWGVPTKGYKTRSNKRTDKYIVRRRNK.

The disordered stretch occupies residues 223-274 (VVMNPVDHPHGGGEGRTSGGRHPVSPWGVPTKGYKTRSNKRTDKYIVRRRNK).

The protein belongs to the universal ribosomal protein uL2 family. As to quaternary structure, part of the 50S ribosomal subunit. Forms a bridge to the 30S subunit in the 70S ribosome.

Its function is as follows. One of the primary rRNA binding proteins. Required for association of the 30S and 50S subunits to form the 70S ribosome, for tRNA binding and peptide bond formation. It has been suggested to have peptidyltransferase activity; this is somewhat controversial. Makes several contacts with the 16S rRNA in the 70S ribosome. The polypeptide is Large ribosomal subunit protein uL2 (Vibrio cholerae serotype O1 (strain M66-2)).